The sequence spans 69 residues: Cold shock-like protein CspC (69 aa).

Residues 6–66 (GQVKWFNESK…GQKGPAAVNV (61 aa)) enclose the CSD domain.

It is found in the cytoplasm. The protein is Cold shock-like protein CspC (cspC) of Escherichia coli O157:H7.